Consider the following 260-residue polypeptide: Multiple myeloma tumor-associated protein 2 homolog (260 aa).

Residues M1–G11 show a composition bias toward gly residues. A disordered region spans residues M1–V21. Residues K22, K104, and K113 each participate in a glycyl lysine isopeptide (Lys-Gly) (interchain with G-Cter in SUMO2) cross-link. The span at E106 to D116 shows a compositional bias: basic and acidic residues. 2 disordered regions span residues E106–L133 and S146–D260. The span at R117 to A132 shows a compositional bias: low complexity. 2 positions are modified to phosphoserine: S123 and S127. The segment covering R170–H182 has biased composition (basic and acidic residues). A compositionally biased stretch (basic residues) spans K183–E206. A phosphoserine mark is found at S215, S216, and S219.

This is Multiple myeloma tumor-associated protein 2 homolog (Mmtag2) from Mus musculus (Mouse).